A 422-amino-acid polypeptide reads, in one-letter code: Nucleoside transporter 1 (422 aa).

Residues 1–38 (MSTGKESSKAYADIESRGDYKDDGKKGSTLSSKQHFML) lie on the Cytoplasmic side of the membrane. The helical transmembrane segment at 39–59 (SLTFILIGLSSLNVWNTALGL) threads the bilayer. Tryptophan 53 contributes to the inosine binding site. Topologically, residues 60–63 (NINF) are extracellular. A helical transmembrane segment spans residues 64-82 (KYNTFQITGLVCSSIVALF). Residues 83 to 87 (VEIPK) lie on the Cytoplasmic side of the membrane. A helical membrane pass occupies residues 88 to 107 (IMLPFLLGGLSILCAGFQIS). At 108–116 (HSFFTDTQF) the chain is on the extracellular side. The chain crosses the membrane as a helical span at residues 117 to 139 (DTYCLVAFIVIGVVAGLAQTIAF). An inosine-binding site is contributed by glutamine 135. Residues 140–149 (NIGSTMEDNM) lie on the Cytoplasmic side of the membrane. The helical transmembrane segment at 150–174 (GGYMSAGIGISGVFIFVINLLLDQF) threads the bilayer. Over 175-185 (VSPEKHYGVNK) the chain is Extracellular. Residues 186-208 (AKLLYLYIICELCLILAIVFCVC) form a helical membrane-spanning segment. At 209–241 (NLDLTNKNNKKDEENKENNATLSYMELFKDSYK) the chain is on the cytoplasmic side. Residues 242-265 (AILTMFLVNWLTLQLFPGVGHKKW) traverse the membrane as a helical segment. Residues 266–274 (QESHNISDY) lie on the Extracellular side of the membrane. A helical membrane pass occupies residues 275–294 (NVTIIVGMFQVFDFLSRYPP). Aspartate 287 and arginine 291 together coordinate inosine. The Cytoplasmic portion of the chain corresponds to 295–309 (NLTHIKIFKNFTFSL). The chain crosses the membrane as a helical span at residues 310–330 (NKLLVANSLRLLFIPWFILNA). Residues 331–338 (CVDHPFFK) lie on the Extracellular side of the membrane. A helical membrane pass occupies residues 339–362 (NIVQQCVCMAMLAFTNGWFNTVPF). Residues 363–374 (LVFVKELKKAKK) lie on the Cytoplasmic side of the membrane. The helical transmembrane segment at 375-397 (KKEIEIISTFLVIAMFVGLFCGI) threads the bilayer. At 398 to 422 (WTTYIYNLFNIVLPKPDLPPIDVTQ) the chain is on the extracellular side.

The protein belongs to the SLC29A/ENT transporter (TC 2.A.57) family.

Its subcellular location is the cell membrane. It carries out the reaction inosine(in) = inosine(out). It catalyses the reaction adenosine(in) = adenosine(out). The enzyme catalyses hypoxanthine(out) = hypoxanthine(in). The catalysed reaction is guanosine(in) = guanosine(out). It carries out the reaction guanine(out) = guanine(in). It catalyses the reaction thymidine(in) = thymidine(out). The enzyme catalyses uridine(out) = uridine(in). The catalysed reaction is uracil(in) = uracil(out). It carries out the reaction thymine(out) = thymine(in). It catalyses the reaction adenine(out) = adenine(in). The enzyme catalyses cytosine(out) = cytosine(in). The catalysed reaction is xanthine(out) = xanthine(in). GSK4 (5-methyl-N-[2-(2-oxo-1-azepanyl)ethyl]-2-phenyl-1,3-oxazole-4-carbox-amide) disrupts the transport activity at 500 nM. Inhibited partially by 10 uM dipyridamole. Inhibited partially by N,N'-1,3-benzothiazole-2,6-diyldi(2-furamide), 2-bromo-N-(4-[1,3]oxazolo[4,5-b]pyridin-2-ylphenyl)benzamide, 4-methyl-7-[(3,4,5-trimethoxybenzyl)oxy]-2H-chromen-2-one, 2-(1-methyl-1H-indol-3-yl)-2-oxo-N-[4-(pyrrolidin-1-ylcarbonyl)phenyl]acet amide and 2-[2-(2-methylphenyl)vinyl]-4(3H)-quinazolinone. Functionally, sodium-independent nucleoside and nucleobase transporter with a broad substrate specificity. Plays a key role in the utilization of host purine sources by P.falciparum during intraerythrocytic development enabling parasite growth in the presence of physiological concentrations of adenosine, inosine, guanine, guanosine, xanthine and hypoxanthine. Essential for parasite transition from ring to trophozoite or from trophozoite to schizont stage but not for erythrocyte invasion by merozoites. In Plasmodium falciparum (isolate 3D7), this protein is Nucleoside transporter 1.